The following is a 1047-amino-acid chain: Helicase-like transcription factor CHR27 (1047 aa).

Over residues 1–11 the composition is skewed to low complexity; that stretch reads MDSAIEISSGS. Disordered stretches follow at residues 1 to 89, 103 to 130, and 145 to 174; these read MDSA…SGSG, RTLP…SGSR, and KRTL…GSRF. Composition is skewed to polar residues over residues 52–88 and 118–128; these read TNQA…SSGS and SGTNNISNASG. Positions 296–597 constitute a Helicase ATP-binding domain; the sequence is ETSSFNCPGG…YSYFRFLRYD (302 aa). 309-316 lines the ATP pocket; that stretch reads DDQGLGKT. Disordered stretches follow at residues 349 to 407 and 511 to 533; these read ADDE…TRAF and VGAS…SEPD. The span at 354 to 368 shows a compositional bias: basic and acidic residues; sequence DNAKHESGSHVKPEL. Over residues 370–379 the composition is skewed to polar residues; that stretch reads VSSNSETSVL. The span at 385-400 shows a compositional bias: acidic residues; the sequence is DENDSSDMEKAEDEEA. A compositionally biased stretch (basic residues) spans 511–523; sequence VGASKKSKRRGRK. Residues 751–790 form an RING-type; degenerate zinc finger; it reads CYECNEPPEKPVVTLCGHIFCYECVLEYITGDENTCPVPR. Over residues 851 to 868 the composition is skewed to polar residues; that stretch reads QPDSPNSAQHGQMPSSSR. Residues 851 to 873 are disordered; sequence QPDSPNSAQHGQMPSSSRPYDDD. The region spanning 887–1042 is the Helicase C-terminal domain; the sequence is SPSQGAVKTI…ATRLTVDDLK (156 aa).

The protein belongs to the SNF2/RAD54 helicase family. RAD16 subfamily. In terms of assembly, interacts with SUVR2. Interacts with itself.

The protein resides in the nucleus. Its function is as follows. Probable helicase-like transcription factor involved in transcriptional gene silencing. Associates with SUVR2 and contributes to transcriptional gene silencing at RNA-directed DNA methylation (RdDM) target loci but also at RdDM-independent target loci. May be involved in nucleosome positioning to form ordered nucleosome arrays on chromatin. Associates with SUVR2 and functions redundantly with FRG2. Required for the efficient methylation of a broad range of RdDM target loci. The polypeptide is Helicase-like transcription factor CHR27 (Arabidopsis thaliana (Mouse-ear cress)).